We begin with the raw amino-acid sequence, 62 residues long: Calmodulin regulator protein PCP4 (62 aa).

The disordered stretch occupies residues 1 to 39; that stretch reads MSERQSAGATNGKDKTSGDNDGQKKVQEEFDIDMDAPET. Basic and acidic residues predominate over residues 12 to 28; the sequence is GKDKTSGDNDGQKKVQE. An acidic; binds calcium and is required for modulating the calcium-binding kinetics of calmodulin region spans residues 28 to 40; the sequence is EEFDIDMDAPETE. The 24-residue stretch at 39-62 folds into the IQ domain; it reads TERAAVAIQSQFRKFQKKKAGSQS.

This sequence belongs to the PCP4 family. In terms of assembly, binds to both calcium-free and calcium-bound calmodulin. The affinity for the calcium-bound form is 50-fold greater.

Functions as a modulator of calcium-binding by calmodulin. Thereby, regulates calmodulin activity and the different processes it controls. For instance, may play a role in neuronal differentiation through activation of calmodulin-dependent kinase signaling pathways. This is Calmodulin regulator protein PCP4 from Mus musculus (Mouse).